Here is a 166-residue protein sequence, read N- to C-terminus: Flagellar protein LafL (166 aa).

A helical membrane pass occupies residues 6–26 (MIAMFIAMIITSALVSAATIM).

The protein belongs to the FliL family.

Its subcellular location is the cell inner membrane. In terms of biological role, controls the rotational direction of flagella during chemotaxis. This chain is Flagellar protein LafL (lafL), found in Vibrio parahaemolyticus serotype O3:K6 (strain RIMD 2210633).